The primary structure comprises 1456 residues: ABC transporter G family member 44 (1456 aa).

An ABC transporter 1 domain is found at 169–442 (ANLLHVVPNK…FESMGFKCPD (274 aa)). 202-209 (GPPGSGKT) provides a ligand contact to ATP. The ABC transmembrane type-2 1 domain occupies 520–733 (ELLRTCIARE…AMNAIAVNEF (214 aa)). A run of 6 helical transmembrane segments spans residues 538-558 (FVYR…MTLF), 571-591 (GIVY…NGFS), 626-646 (IPIS…VIGF), 658-678 (LLLL…AALG), 682-702 (VVAN…SGFI), and 768-788 (IGVG…TIAL). The tract at residues 812-844 (NITGETINDPRNSASSGQTTNTRRNAAPGEASE) is disordered. The segment covering 814–835 (TGETINDPRNSASSGQTTNTRR) has biased composition (polar residues). Residues 858 to 1110 (VAFNNIRYSV…DLIEYFEGVE (253 aa)) enclose the ABC transporter 2 domain. 903–910 (GVSGAGKT) lines the ATP pocket. Positions 1183 to 1397 (TQCMACLWKQ…TLYGLVASQF (215 aa)) constitute an ABC transmembrane type-2 2 domain. Helical transmembrane passes span 1202-1222 (YTVV…TIFW), 1242-1262 (YAAV…VVAV), 1290-1310 (LPYV…MIGF), 1317-1337 (FFWY…YGML), 1347-1367 (IASI…GFVI), 1378-1398 (WYSW…SQFG), and 1425-1445 (FLGV…VSFS).

Belongs to the ABC transporter superfamily. ABCG family. PDR (TC 3.A.1.205) subfamily.

Its subcellular location is the membrane. Its function is as follows. May be a general defense protein. The chain is ABC transporter G family member 44 from Oryza sativa subsp. japonica (Rice).